The sequence spans 339 residues: DNA-directed RNA polymerase subunit alpha (339 aa).

An alpha N-terminal domain (alpha-NTD) region spans residues 1–233; the sequence is MVREEVAGST…DLFLPFLHAE (233 aa). Residues 264-339 form an alpha C-terminal domain (alpha-CTD) region; the sequence is KKGIPLNCIF…IDLLKNKLSF (76 aa).

This sequence belongs to the RNA polymerase alpha chain family. As to quaternary structure, in plastids the minimal PEP RNA polymerase catalytic core is composed of four subunits: alpha, beta, beta', and beta''. When a (nuclear-encoded) sigma factor is associated with the core the holoenzyme is formed, which can initiate transcription.

The protein resides in the plastid. Its subcellular location is the chloroplast. It carries out the reaction RNA(n) + a ribonucleoside 5'-triphosphate = RNA(n+1) + diphosphate. Its function is as follows. DNA-dependent RNA polymerase catalyzes the transcription of DNA into RNA using the four ribonucleoside triphosphates as substrates. This Secale strictum (Mountain rye) protein is DNA-directed RNA polymerase subunit alpha.